A 468-amino-acid chain; its full sequence is Cell division protein FtsA (468 aa).

Residues 416-468 are disordered; that stretch reads NKKDTHENEVESSDEEIYQSEDNHQEHKQNHEHVQDKDKEESKFKKLMKSLFE. Acidic residues predominate over residues 425–434; sequence VESSDEEIYQ. Positions 436 to 459 are enriched in basic and acidic residues; sequence EDNHQEHKQNHEHVQDKDKEESKF.

It belongs to the FtsA/MreB family. Self-interacts. Interacts with FtsZ.

It localises to the cell membrane. In terms of biological role, cell division protein that is involved in the assembly of the Z ring. May serve as a membrane anchor for the Z ring. The protein is Cell division protein FtsA of Staphylococcus aureus (strain MRSA252).